Reading from the N-terminus, the 157-residue chain is Large ribosomal subunit protein eL24 (157 aa).

Residues 94–157 form a disordered region; it reads RNQKPEVRKA…ISAPRVGGKR (64 aa). Residues 96 to 117 are compositionally biased toward basic and acidic residues; sequence QKPEVRKAQREQAIRAAKEAKK. The span at 123–140 shows a compositional bias: low complexity; it reads KKPAAPSAKASTKTAQKP.

Belongs to the eukaryotic ribosomal protein eL24 family. As to quaternary structure, component of the large ribosomal subunit.

It localises to the cytoplasm. Component of the large ribosomal subunit. The ribosome is a large ribonucleoprotein complex responsible for the synthesis of proteins in the cell. This Pagrus major (Red sea bream) protein is Large ribosomal subunit protein eL24 (rpl24).